The primary structure comprises 160 residues: 6,7-dimethyl-8-ribityllumazine synthase (160 aa).

Residues Trp27, 59–61, and 81–83 contribute to the 5-amino-6-(D-ribitylamino)uracil site; these read AIE and VVI. 86 to 87 contacts (2S)-2-hydroxy-3-oxobutyl phosphate; the sequence is QT. The active-site Proton donor is the His89. Asn114 contributes to the 5-amino-6-(D-ribitylamino)uracil binding site. Position 128 (Arg128) interacts with (2S)-2-hydroxy-3-oxobutyl phosphate.

It belongs to the DMRL synthase family. Homopentamer.

The enzyme catalyses (2S)-2-hydroxy-3-oxobutyl phosphate + 5-amino-6-(D-ribitylamino)uracil = 6,7-dimethyl-8-(1-D-ribityl)lumazine + phosphate + 2 H2O + H(+). Its pathway is cofactor biosynthesis; riboflavin biosynthesis; riboflavin from 2-hydroxy-3-oxobutyl phosphate and 5-amino-6-(D-ribitylamino)uracil: step 1/2. Functionally, catalyzes the formation of 6,7-dimethyl-8-ribityllumazine by condensation of 5-amino-6-(D-ribitylamino)uracil with 3,4-dihydroxy-2-butanone 4-phosphate. This is the penultimate step in the biosynthesis of riboflavin. The sequence is that of 6,7-dimethyl-8-ribityllumazine synthase from Mycobacterium avium (strain 104).